The chain runs to 282 residues: Pantothenate synthetase (282 aa).

26–33 (MGNLHEGH) is a binding site for ATP. The Proton donor role is filled by His33. Gln57 provides a ligand contact to (R)-pantoate. Residue Gln57 coordinates beta-alanine. 144–147 (GKKD) contacts ATP. Gln150 lines the (R)-pantoate pocket. Residues Val173 and 181 to 184 (LSSR) contribute to the ATP site.

The protein belongs to the pantothenate synthetase family. Homodimer.

Its subcellular location is the cytoplasm. The enzyme catalyses (R)-pantoate + beta-alanine + ATP = (R)-pantothenate + AMP + diphosphate + H(+). The protein operates within cofactor biosynthesis; (R)-pantothenate biosynthesis; (R)-pantothenate from (R)-pantoate and beta-alanine: step 1/1. In terms of biological role, catalyzes the condensation of pantoate with beta-alanine in an ATP-dependent reaction via a pantoyl-adenylate intermediate. This chain is Pantothenate synthetase, found in Cupriavidus taiwanensis (strain DSM 17343 / BCRC 17206 / CCUG 44338 / CIP 107171 / LMG 19424 / R1) (Ralstonia taiwanensis (strain LMG 19424)).